The following is a 110-amino-acid chain: Protein RALF-like 19 (110 aa).

The first 23 residues, M1–A23, serve as a signal peptide directing secretion. A propeptide spans T24–A58 (removed in mature form). 2 disulfide bridges follow: C76-C86 and C99-C105.

The protein belongs to the plant rapid alkalinization factor (RALF) family. Post-translationally, proteolytically cleaved, probably by S1P, a subtilisin-like serine protease (subtilase).

Its subcellular location is the secreted. Functionally, cell signaling peptide that may regulate plant stress, growth, and development. Mediates a rapid alkalinization of extracellular space by mediating a transient increase in the cytoplasmic Ca(2+) concentration leading to a calcium-dependent signaling events through a cell surface receptor and a concomitant activation of some intracellular mitogen-activated protein kinases. The sequence is that of Protein RALF-like 19 (RALFL19) from Arabidopsis thaliana (Mouse-ear cress).